The primary structure comprises 194 residues: Thymidine kinase (194 aa).

ATP-binding positions include 15 to 22 (GSMFSGKS) and 88 to 91 (DEVQ). Glutamate 89 (proton acceptor) is an active-site residue. Residues cysteine 145, cysteine 148, cysteine 183, and cysteine 186 each contribute to the Zn(2+) site.

The protein belongs to the thymidine kinase family. Homotetramer.

It localises to the cytoplasm. The catalysed reaction is thymidine + ATP = dTMP + ADP + H(+). This is Thymidine kinase from Bacillus cereus (strain AH820).